We begin with the raw amino-acid sequence, 158 residues long: Non-secretory ribonuclease (158 aa).

Positions Met-1–Val-27 are cleaved as a signal peptide. Trp-34 is a glycosylation site (C-linked (Man) tryptophan). Residue His-42 is the Proton acceptor of the active site. Intrachain disulfides connect Cys-50-Cys-110, Cys-64-Cys-121, Cys-82-Cys-136, and Cys-89-Cys-98. Tyr-60 is modified (3'-nitrotyrosine). Lys-65–Thr-69 contributes to the substrate binding site. N-linked (GlcNAc...) asparagine glycans are attached at residues Asn-86, Asn-92, and Asn-111. The active-site Proton donor is His-153.

The protein belongs to the pancreatic ribonuclease family. In terms of assembly, interacts with and forms a tight 1:1 complex with RNH1. Dimerization of two such complexes may occur.

The protein localises to the lysosome. It localises to the cytoplasmic granule. The enzyme catalyses an [RNA] containing cytidine + H2O = an [RNA]-3'-cytidine-3'-phosphate + a 5'-hydroxy-ribonucleotide-3'-[RNA].. It catalyses the reaction an [RNA] containing uridine + H2O = an [RNA]-3'-uridine-3'-phosphate + a 5'-hydroxy-ribonucleotide-3'-[RNA].. Functionally, this is a non-secretory ribonuclease. It is a pyrimidine specific nuclease with a slight preference for U. Cytotoxin and helminthotoxin. Possesses a wide variety of biological activities. This is Non-secretory ribonuclease (RNASE2) from Saguinus oedipus (Cotton-top tamarin).